The following is a 49-amino-acid chain: Osteocalcin (49 aa).

The Gla domain occupies Y1–G47. At P9 the chain carries Hydroxyproline. Residues E17, E21, E24, and D30 each coordinate Ca(2+). 3 positions are modified to 4-carboxyglutamate: E17, E21, and E24. Residues C23 and C29 are joined by a disulfide bond.

The protein belongs to the osteocalcin/matrix Gla protein family. Gamma-carboxyglutamate residues are formed by vitamin K dependent carboxylation by GGCX. These residues are essential for the binding of calcium. Decarboxylation promotes the hormone activity.

The protein resides in the secreted. Its function is as follows. The carboxylated form is one of the main organic components of the bone matrix, which constitutes 1-2% of the total bone protein. It acts as a negative regulator of bone formation and is required to limit bone formation without impairing bone resorption or mineralization. The carboxylated form binds strongly to apatite and calcium. Functionally, the uncarboxylated form acts as a hormone secreted by osteoblasts, which regulates different cellular processes, such as energy metabolism, male fertility and brain development. Regulates of energy metabolism by acting as a hormone favoring pancreatic beta-cell proliferation, insulin secretion and sensitivity and energy expenditure. Uncarboxylated osteocalcin hormone also promotes testosterone production in the testes: acts as a ligand for G protein-coupled receptor GPRC6A at the surface of Leydig cells, initiating a signaling response that promotes the expression of enzymes required for testosterone synthesis in a CREB-dependent manner. Also acts as a regulator of brain development: osteocalcin hormone crosses the blood-brain barrier and acts as a ligand for GPR158 on neurons, initiating a signaling response that prevents neuronal apoptosis in the hippocampus, favors the synthesis of all monoamine neurotransmitters and inhibits that of gamma-aminobutyric acid (GABA). Osteocalcin also crosses the placenta during pregnancy and maternal osteocalcin is required for fetal brain development. This Sus scrofa (Pig) protein is Osteocalcin (BGLAP).